The sequence spans 531 residues: Transporter mfs1 (531 aa).

10 helical membrane-spanning segments follow: residues 83-103 (LVVTFDVCFLTFAVYMGSAIF), 119-139 (VPVILGLTLFVEGYAVGPLIF), 158-178 (LIVFICLQIPTALGSSLGVLL), 182-202 (FLAGVFGSPALSTGGASLADI), 214-234 (FWSLGAVGGPVLGPLLGAAMV), 241-261 (WQFWLLMMISALVLVIITFFM), 325-345 (IYIGLVYSILYLWFEAFPILF), 358-378 (LVYMGILVGSVLTVAFYFIYL), 398-418 (ILIISFPAAFFIPISLFWFGW), and 424-444 (VHWIVPIVGTLFYASGSFLLF). Residue Asn486 is glycosylated (N-linked (GlcNAc...) asparagine). Residues 496–516 (GWGSTILGVISCIMIPIPFLI) form a helical membrane-spanning segment.

Belongs to the major facilitator superfamily. CAR1 family.

The protein localises to the endoplasmic reticulum. Its subcellular location is the membrane. The polypeptide is Transporter mfs1 (mfs1) (Schizosaccharomyces pombe (strain 972 / ATCC 24843) (Fission yeast)).